Reading from the N-terminus, the 134-residue chain is Complexin-2 (134 aa).

Residues 1 to 114 are disordered; sequence MDFVMKQALG…CGDEEEEEEE (114 aa). Residues 15-85 are compositionally biased toward basic and acidic residues; it reads DMGKMLGGEE…EEKEAEEKAA (71 aa). Positions 28–84 form a coiled coil; the sequence is PDAQKKEEERQEALRQQEEERKAKHARMEAEREKVRQQIRDKYGLKKKEEKEAEEKA. An interaction with the SNARE complex region spans residues 41-97; the sequence is LRQQEEERKAKHARMEAEREKVRQQIRDKYGLKKKEEKEAEEKAALEQPCEGSLTRP. Ser93 is subject to Phosphoserine.

The protein belongs to the complexin/synaphin family. As to quaternary structure, binds to the SNARE core complex containing SNAP25, VAMP2 and STX1A. As to expression, nervous system. Also present in adrenal chromaffin cells (at protein level).

The protein resides in the cytoplasm. It is found in the cytosol. Its subcellular location is the presynapse. It localises to the nucleus. The protein localises to the perikaryon. Negatively regulates the formation of synaptic vesicle clustering at active zone to the presynaptic membrane in postmitotic neurons. Positively regulates a late step in exocytosis of various cytoplasmic vesicles, such as synaptic vesicles and other secretory vesicles. Also involved in mast cell exocytosis. The chain is Complexin-2 (CPLX2) from Bos taurus (Bovine).